The primary structure comprises 109 residues: Large ribosomal subunit protein P2 (109 aa).

The tract at residues 63 to 109 (ASVPSGGAGGASGGAAAAGGAAEEAKEEEKEEEKEESDEDMGFGLFD) is disordered. The segment covering 68 to 79 (GGAGGASGGAAA) has biased composition (gly residues). A compositionally biased stretch (acidic residues) spans 91–103 (EKEEEKEESDEDM). The residue at position 99 (S99) is a Phosphoserine.

Belongs to the eukaryotic ribosomal protein P1/P2 family. P1 and P2 exist as dimers at the large ribosomal subunit.

Functionally, plays an important role in the elongation step of protein synthesis. The sequence is that of Large ribosomal subunit protein P2 from Fusarium culmorum.